Reading from the N-terminus, the 406-residue chain is Probable UDP-arabinose 4-epimerase 3 (406 aa).

The Cytoplasmic segment spans residues 1–26; the sequence is MIPLNRRASQTRGGMEYFDARRKPHN. Residues 27-44 form a helical; Signal-anchor for type II membrane protein membrane-spanning segment; sequence VGKVIAALVLTTLCIFIL. Topologically, residues 45-406 are lumenal; it reads KQSPGFGGSS…KSHPRGYGSN (362 aa). Residue 65 to 96 coordinates NAD(+); the sequence is HVLVTGGAGYIGSHASLRLLKDNYRVTIVDNL. Tyr213 (proton acceptor) is an active-site residue.

Belongs to the NAD(P)-dependent epimerase/dehydratase family. The cofactor is NAD(+).

It is found in the golgi apparatus. The protein localises to the golgi stack membrane. It carries out the reaction UDP-beta-L-arabinopyranose = UDP-alpha-D-xylose. It participates in nucleotide-sugar biosynthesis; UDP-L-arabinose biosynthesis; UDP-L-arabinose from UDP-alpha-D-xylose: step 1/1. The protein operates within cell wall biogenesis; cell wall polysaccharide biosynthesis. This Oryza sativa subsp. japonica (Rice) protein is Probable UDP-arabinose 4-epimerase 3 (UEL-3).